Reading from the N-terminus, the 911-residue chain is Chromatin assembly factor 1 subunit A (911 aa).

The binds PCNA stretch occupies residues 1-31 (MLEEPEAATRTAAAVDCKDRPGFPVKRLIQA). A disordered region spans residues 166–200 (HMEEEPGSPGDPKRTGDCQAGSLQSCPELTPGSRT). The binds CBX1 and CBX3 chromo shadow domains stretch occupies residues 176 to 327 (DPKRTGDCQA…LHRDREQQRE (152 aa)). A compositionally biased stretch (polar residues) spans 186-200 (GSLQSCPELTPGSRT). Phosphoserine occurs at positions 190 and 208. The PxVxL motif motif lies at 217–230 (FIEKVPVVVLEDIL). Disordered stretches follow at residues 250–408 (SESE…EEEK) and 578–618 (DSDD…VPHG). The segment covering 265 to 281 (LSHSSTNSSSPTSSPEG) has biased composition (low complexity). Ser-293 is modified (phosphoserine). Over residues 310-408 (STEKGRSKLH…EEKRLREEEK (99 aa)) the composition is skewed to basic and acidic residues. Composition is skewed to acidic residues over residues 578–589 (DSDDEWEEEEPG) and 597–612 (GDEDDDVGEDEDEDDG). The necessary for homodimerization and competence for chromatin assembly stretch occupies residues 621–657 (SEDEGVTEECADPENHKVHQKLKAKEWDELLAKGKRF). The tract at residues 639 to 911 (HQKLKAKEWD…APIPAPTLCK (273 aa)) is binds to p60. Residue Ser-776 is modified to Phosphoserine. Disordered regions lie at residues 819-843 (PSAPREDSGSASTEGPGQSTPMLLK) and 866-886 (GSGDMDGFQADTEEDEEDDTD). The span at 827-839 (GSASTEGPGQSTP) shows a compositional bias: polar residues. Thr-838 is modified (phosphothreonine). Residues 876–886 (DTEEDEEDDTD) show a composition bias toward acidic residues.

This sequence belongs to the CHAF1A family. Homodimer. Part of the CAF-1 complex that contains RBBP4, CHAF1B and CHAF1A. CHAF1A binds directly to CHAF1B. Only minor amounts of RBBP4 are complexed with CHAF1A and CHAF1B in G1 phase. Interacts with PCNA; the interaction is direct. Interacts (via the PxVxL motif) with CBX5; the interaction is direct. Interacts with MBD1. Interacts with histones H3.1, H3.2 and H3.1t.

The protein localises to the nucleus. Functionally, acts as a component of the histone chaperone complex chromatin assembly factor 1 (CAF-1), which assembles histone octamers onto DNA during replication and repair. CAF-1 performs the first step of the nucleosome assembly process, bringing newly synthesized histones H3 and H4 to replicating DNA; histones H2A/H2B can bind to this chromatin precursor subsequent to DNA replication to complete the histone octamer. It may play a role in heterochromatin maintenance in proliferating cells by bringing newly synthesized cbx proteins to heterochromatic DNA replication foci. The sequence is that of Chromatin assembly factor 1 subunit A from Mus musculus (Mouse).